Reading from the N-terminus, the 70-residue chain is DNA gyrase inhibitor YacG (70 aa).

4 residues coordinate Zn(2+): C20, C23, C35, and C39.

It belongs to the DNA gyrase inhibitor YacG family. Interacts with GyrB. Requires Zn(2+) as cofactor.

Functionally, inhibits all the catalytic activities of DNA gyrase by preventing its interaction with DNA. Acts by binding directly to the C-terminal domain of GyrB, which probably disrupts DNA binding by the gyrase. The chain is DNA gyrase inhibitor YacG from Rhizobium etli (strain ATCC 51251 / DSM 11541 / JCM 21823 / NBRC 15573 / CFN 42).